We begin with the raw amino-acid sequence, 345 residues long: Heat-inducible transcription repressor HrcA (345 aa).

The protein belongs to the HrcA family.

Functionally, negative regulator of class I heat shock genes (grpE-dnaK-dnaJ and groELS operons). Prevents heat-shock induction of these operons. The protein is Heat-inducible transcription repressor HrcA of Desulfitobacterium hafniense (strain DSM 10664 / DCB-2).